Consider the following 415-residue polypeptide: rRNA methyltransferase 3, mitochondrial (415 aa).

The N-terminal 47 residues, 1–47 (MAALCRGTVRACILKPLGLSVSLQVKRNVRALRRTPVRVLPAAEKGR), are a transit peptide targeting the mitochondrion. The interval 41–73 (PAAEKGRERKEVEARRPQQPRQSEYQTRTSQGV) is disordered. Residues 44 to 56 (EKGRERKEVEARR) are compositionally biased toward basic and acidic residues. The segment covering 59-73 (QPRQSEYQTRTSQGV) has biased composition (polar residues). Residues G357, I381, and L390 each contribute to the S-adenosyl-L-methionine site.

The protein belongs to the class IV-like SAM-binding methyltransferase superfamily. RNA methyltransferase TrmH family.

Its subcellular location is the mitochondrion. The enzyme catalyses a uridine in rRNA + S-adenosyl-L-methionine = a 2'-O-methyluridine in rRNA + S-adenosyl-L-homocysteine + H(+). Its function is as follows. S-adenosyl-L-methionine-dependent 2'-O-ribose methyltransferase that catalyzes the formation of 2'-O-methylguanosine at position 1370 (Gm1370) in the mitochondrial large subunit ribosomal RNA (mtLSU rRNA), a conserved modification in the peptidyl transferase domain of the mtLSU rRNA. Also required for formation of 2'-O-methyluridine at position 1369 (Um1369) mediated by MRM2. The protein is rRNA methyltransferase 3, mitochondrial of Xenopus tropicalis (Western clawed frog).